The primary structure comprises 156 residues: 6,7-dimethyl-8-ribityllumazine synthase (156 aa).

Residues F23, 57 to 59, and 81 to 83 contribute to the 5-amino-6-(D-ribitylamino)uracil site; these read AYE and AVI. (2S)-2-hydroxy-3-oxobutyl phosphate is bound at residue 86–87; sequence ST. The active-site Proton donor is the H89. 5-amino-6-(D-ribitylamino)uracil is bound at residue F114. Residue R128 coordinates (2S)-2-hydroxy-3-oxobutyl phosphate.

Belongs to the DMRL synthase family.

The enzyme catalyses (2S)-2-hydroxy-3-oxobutyl phosphate + 5-amino-6-(D-ribitylamino)uracil = 6,7-dimethyl-8-(1-D-ribityl)lumazine + phosphate + 2 H2O + H(+). The protein operates within cofactor biosynthesis; riboflavin biosynthesis; riboflavin from 2-hydroxy-3-oxobutyl phosphate and 5-amino-6-(D-ribitylamino)uracil: step 1/2. Its function is as follows. Catalyzes the formation of 6,7-dimethyl-8-ribityllumazine by condensation of 5-amino-6-(D-ribitylamino)uracil with 3,4-dihydroxy-2-butanone 4-phosphate. This is the penultimate step in the biosynthesis of riboflavin. This Helicobacter hepaticus (strain ATCC 51449 / 3B1) protein is 6,7-dimethyl-8-ribityllumazine synthase.